Reading from the N-terminus, the 844-residue chain is DNA mismatch repair protein MutS (844 aa).

G610–S617 contributes to the ATP binding site.

This sequence belongs to the DNA mismatch repair MutS family.

Functionally, this protein is involved in the repair of mismatches in DNA. It is possible that it carries out the mismatch recognition step. This protein has a weak ATPase activity. This Francisella tularensis subsp. novicida (strain U112) protein is DNA mismatch repair protein MutS.